A 245-amino-acid chain; its full sequence is uncharacterized protein (245 aa).

6 consecutive transmembrane segments (helical) span residues 38 to 58 (IYPA…AIFI), 68 to 88 (TIEL…QGYF), 100 to 120 (IWSL…LILA), 129 to 149 (VLFI…FVSA), 194 to 214 (VNNI…FLMN), and 217 to 237 (IAFI…LIIH).

It belongs to the acyltransferase 3 family.

The protein resides in the cell membrane. This is an uncharacterized protein from Haemophilus influenzae (strain ATCC 51907 / DSM 11121 / KW20 / Rd).